A 316-amino-acid chain; its full sequence is N-acetyl-gamma-glutamyl-phosphate reductase (316 aa).

Residue Cys136 is part of the active site.

Belongs to the NAGSA dehydrogenase family. Type 1 subfamily.

Its subcellular location is the cytoplasm. It carries out the reaction N-acetyl-L-glutamate 5-semialdehyde + phosphate + NADP(+) = N-acetyl-L-glutamyl 5-phosphate + NADPH + H(+). It functions in the pathway amino-acid biosynthesis; L-arginine biosynthesis; N(2)-acetyl-L-ornithine from L-glutamate: step 3/4. Its function is as follows. Catalyzes the NADPH-dependent reduction of N-acetyl-5-glutamyl phosphate to yield N-acetyl-L-glutamate 5-semialdehyde. This is N-acetyl-gamma-glutamyl-phosphate reductase from Xanthomonas axonopodis pv. citri (strain 306).